A 270-amino-acid chain; its full sequence is 4-hydroxy-tetrahydrodipicolinate reductase (270 aa).

NAD(+) is bound by residues 9–14 and Glu-35; that span reads GAGGRM. Arg-36 serves as a coordination point for NADP(+). NAD(+) contacts are provided by residues 99–101 and 123–126; these read GTT and ASNF. His-156 (proton donor/acceptor) is an active-site residue. His-157 is a binding site for (S)-2,3,4,5-tetrahydrodipicolinate. Residue Lys-160 is the Proton donor of the active site. 166–167 contributes to the (S)-2,3,4,5-tetrahydrodipicolinate binding site; that stretch reads GT.

Belongs to the DapB family.

Its subcellular location is the cytoplasm. The enzyme catalyses (S)-2,3,4,5-tetrahydrodipicolinate + NAD(+) + H2O = (2S,4S)-4-hydroxy-2,3,4,5-tetrahydrodipicolinate + NADH + H(+). It carries out the reaction (S)-2,3,4,5-tetrahydrodipicolinate + NADP(+) + H2O = (2S,4S)-4-hydroxy-2,3,4,5-tetrahydrodipicolinate + NADPH + H(+). It participates in amino-acid biosynthesis; L-lysine biosynthesis via DAP pathway; (S)-tetrahydrodipicolinate from L-aspartate: step 4/4. In terms of biological role, catalyzes the conversion of 4-hydroxy-tetrahydrodipicolinate (HTPA) to tetrahydrodipicolinate. The polypeptide is 4-hydroxy-tetrahydrodipicolinate reductase (Haemophilus influenzae (strain ATCC 51907 / DSM 11121 / KW20 / Rd)).